The primary structure comprises 483 residues: UDP-glucosyl transferase 73B2 (483 aa).

His22 acts as the Proton acceptor in catalysis. His22 provides a ligand contact to an anthocyanidin. Residue Asp133 is the Charge relay of the active site. Residues Ala355, Gln357, His372, Trp375, Asn376, Ser377, and Glu380 each coordinate UDP-alpha-D-glucose. Ala395 serves as a coordination point for an anthocyanidin. Residues Glu396 and Gln397 each coordinate UDP-alpha-D-glucose.

This sequence belongs to the UDP-glycosyltransferase family. In terms of tissue distribution, expressed in roots and flowers.

It carries out the reaction a 7-O-hydroxy-flavonol + UDP-alpha-D-glucose = a flavonol 7-O-beta-D-glucoside + UDP + H(+). It participates in secondary metabolite biosynthesis; flavonoid biosynthesis. In terms of biological role, catalyzes the glycosylation of flavonoids from UDP-glucose. Uses a wide range of flavonoid substrates including flavonols (quercetin, kaempferol, isorhamnetin, 3-OH 7,2',4'-MeO-flavone), flavones (luteolin, apigenin), flavanones (naringenin, hesperetin), flavanonols (taxifolin), isoflavones (genistein, daidzein), flavonol glycosides (quercitrin, isoquercitrin, rutin), and chalcones (isoliquiritigenin). Specific for the C-7 position, with a 20-fold lower activity for the C-3 position. The protein is UDP-glucosyl transferase 73B2 (UGT73B2) of Arabidopsis thaliana (Mouse-ear cress).